Consider the following 653-residue polypeptide: PAN2-PAN3 deadenylation complex subunit PAN3 (653 aa).

2 disordered regions span residues 1 to 21 (MASDSRRGTGSPKMKGRENAK) and 45 to 128 (HDPN…AAPD). The segment at 19–48 (NAKDTLCRNVTIYGRCRYEDKGCVYNHDPN) adopts a C3H1-type zinc-finger fold. Residues 68–95 (SFTPSLLSSNGSSPTSSSATLKKTTTIS) are compositionally biased toward low complexity. Over residues 108–119 (GISSRSNASTPS) the composition is skewed to polar residues. A pseudokinase domain region spans residues 256–516 (QTLPNTQLPA…TIDIFITGIS (261 aa)). ATP is bound by residues R308, 357–364 (DYHPLSKT), and 416–417 (SK). The stretch at 517–555 (SQLMSTFDSALHMDDQLTSDLSRELENGRLVRLMTKLNF) forms a coiled coil. The tract at residues 556–653 (INERPEYEHD…ALLKPTRRVH (98 aa)) is knob domain.

Belongs to the protein kinase superfamily. PAN3 family. In terms of assembly, homodimer. Forms a heterotrimer with a catalytic subunit pan2 to form the poly(A)-nuclease (PAN) deadenylation complex. Interacts (via PAM-2 motif) with poly(A)-binding protein pab1 (via PABC domain), conferring substrate specificity of the enzyme complex.

The protein localises to the cytoplasm. In terms of biological role, regulatory subunit of the poly(A)-nuclease (PAN) deadenylation complex, one of two cytoplasmic mRNA deadenylases involved in mRNA turnover. PAN specifically shortens poly(A) tails of RNA and the activity is stimulated by poly(A)-binding protein pab1. PAN deadenylation is followed by rapid degradation of the shortened mRNA tails by the CCR4-NOT complex. Deadenylated mRNAs are then degraded by two alternative mechanisms, namely exosome-mediated 3'-5' exonucleolytic degradation, or deadenylation-dependent mRNA decaping and subsequent 5'-3' exonucleolytic degradation by xrn1. May also be involved in post-transcriptional maturation of mRNA poly(A) tails. pan3 acts as a positive regulator for PAN activity, recruiting the catalytic subunit pan2 to mRNA via its interaction with RNA and with pab1. This is PAN2-PAN3 deadenylation complex subunit PAN3 from Aspergillus terreus (strain NIH 2624 / FGSC A1156).